A 132-amino-acid chain; its full sequence is Small ribosomal subunit protein uS8 (132 aa).

Belongs to the universal ribosomal protein uS8 family. In terms of assembly, part of the 30S ribosomal subunit. Contacts proteins S5 and S12.

Its function is as follows. One of the primary rRNA binding proteins, it binds directly to 16S rRNA central domain where it helps coordinate assembly of the platform of the 30S subunit. This chain is Small ribosomal subunit protein uS8, found in Bartonella bacilliformis (strain ATCC 35685 / KC583 / Herrer 020/F12,63).